The primary structure comprises 349 residues: tRNA pseudouridine synthase D (349 aa).

Residue Phe-26 coordinates substrate. The Nucleophile role is filled by Asp-79. Asn-128 lines the substrate pocket. One can recognise a TRUD domain in the interval 154–303; it reads GVPNYFGSQR…VDAARRAMLV (150 aa). A substrate-binding site is contributed by Phe-329.

This sequence belongs to the pseudouridine synthase TruD family.

The enzyme catalyses uridine(13) in tRNA = pseudouridine(13) in tRNA. Responsible for synthesis of pseudouridine from uracil-13 in transfer RNAs. The sequence is that of tRNA pseudouridine synthase D from Erwinia tasmaniensis (strain DSM 17950 / CFBP 7177 / CIP 109463 / NCPPB 4357 / Et1/99).